The primary structure comprises 150 residues: MALDQSFVGRTYPPTPAYEVGREKIREFAEAVGDTHPAYVDAEAARALGHADVIAPPTFVFSITYRAAGEVVRDPQLGLDYSRVVHGDQKFSYVRPVRAGDRLTVTSTIEAVKSLAGNDIVDIRGDVHDETGELVVTALTKLVARAAEEA.

In terms of domain architecture, MaoC-like spans 10-116 (RTYPPTPAYE…STIEAVKSLA (107 aa)).

This sequence belongs to the UPF0336 family.

The sequence is that of UPF0336 protein SGR_2883 from Streptomyces griseus subsp. griseus (strain JCM 4626 / CBS 651.72 / NBRC 13350 / KCC S-0626 / ISP 5235).